Here is a 243-residue protein sequence, read N- to C-terminus: ATP synthase subunit a, chloroplastic (243 aa).

5 helical membrane passes run 32-52, 96-116, 129-149, 195-215, and 216-236; these read GQVL…SFVG, TVFL…WALI, DINT…YAGI, LVVG…IMLL, and GCFT…AYIG.

The protein belongs to the ATPase A chain family. In terms of assembly, F-type ATPases have 2 components, CF(1) - the catalytic core - and CF(0) - the membrane proton channel. CF(1) has five subunits: alpha(3), beta(3), gamma(1), delta(1), epsilon(1). CF(0) has four main subunits: a, b, b' and c.

It is found in the plastid. The protein localises to the chloroplast thylakoid membrane. Key component of the proton channel; it plays a direct role in the translocation of protons across the membrane. This chain is ATP synthase subunit a, chloroplastic, found in Tetradesmus obliquus (Green alga).